The sequence spans 104 residues: MAAKIRRQDEVIVLAGKDKGKRAKVAQVLPTGKLIVEGINLVKKHQKPNPQLGVAGGIVEKEAPIQASNVAIFNPVTGKADRVGFRFEDGKKVRFFKSNSELVK.

It belongs to the universal ribosomal protein uL24 family. In terms of assembly, part of the 50S ribosomal subunit.

In terms of biological role, one of two assembly initiator proteins, it binds directly to the 5'-end of the 23S rRNA, where it nucleates assembly of the 50S subunit. Its function is as follows. One of the proteins that surrounds the polypeptide exit tunnel on the outside of the subunit. This is Large ribosomal subunit protein uL24 from Shewanella oneidensis (strain ATCC 700550 / JCM 31522 / CIP 106686 / LMG 19005 / NCIMB 14063 / MR-1).